The sequence spans 1150 residues: ATP-dependent DNA helicase Q-like 4B (1150 aa).

Disordered stretches follow at residues 124-143 and 154-179; these read TPAI…GSTF and CAHN…FSSS. Positions 132-142 are enriched in low complexity; it reads TSRTSSTKGST. Positions 327 to 361 form a coiled coil; it reads DHVEQLHQKRLLLKKQIQQLEILIHNKERKKSQCL. Residues 416–428 are compositionally biased toward basic and acidic residues; the sequence is YDISSGSEEREQS. The disordered stretch occupies residues 416-446; the sequence is YDISSGSEEREQSVSEVIDVTDTESSNDKKW. The Helicase ATP-binding domain maps to 478 to 653; the sequence is INATMSGCDV…VQALGLVNCV (176 aa). An ATP-binding site is contributed by 491–498; it reads MPTGGGKS. The DEAH box motif lies at 597–600; sequence DEAH. Residues 678-823 form the Helicase C-terminal domain; it reads DIDKFIRENH…QMKMGYNCKA (146 aa). Residues 1029-1111 form the HRDC domain; sequence SNLSGILLTA…DSTINDHYKT (83 aa). A disordered region spans residues 1106–1150; that stretch reads NDHYKTRPGSGKRRRDENVNPNVAEDDDPDWSASQSHKKVVKNKK. The segment covering 1141 to 1150 has biased composition (basic residues); it reads SHKKVVKNKK.

This sequence belongs to the helicase family. RecQ subfamily. The cofactor is Mg(2+). Mn(2+) serves as cofactor. In terms of tissue distribution, mostly expressed in roots, seedlings, shoots, shoot apical mersitem, flowers, and siliques.

It localises to the nucleus. It carries out the reaction Couples ATP hydrolysis with the unwinding of duplex DNA by translocating in the 3'-5' direction.. The catalysed reaction is ATP + H2O = ADP + phosphate + H(+). Its function is as follows. 3'-5' DNA helicase that may play a role in the repair of DNA. Required to promote but not to suppress crossovers. The polypeptide is ATP-dependent DNA helicase Q-like 4B (RECQL4B) (Arabidopsis thaliana (Mouse-ear cress)).